A 262-amino-acid polypeptide reads, in one-letter code: Ribosomal RNA small subunit methyltransferase A (262 aa).

His-16, Leu-18, Gly-43, Glu-64, Asp-89, and Asn-109 together coordinate S-adenosyl-L-methionine.

It belongs to the class I-like SAM-binding methyltransferase superfamily. rRNA adenine N(6)-methyltransferase family. RsmA subfamily.

It is found in the cytoplasm. It catalyses the reaction adenosine(1518)/adenosine(1519) in 16S rRNA + 4 S-adenosyl-L-methionine = N(6)-dimethyladenosine(1518)/N(6)-dimethyladenosine(1519) in 16S rRNA + 4 S-adenosyl-L-homocysteine + 4 H(+). Its function is as follows. Specifically dimethylates two adjacent adenosines (A1518 and A1519) in the loop of a conserved hairpin near the 3'-end of 16S rRNA in the 30S particle. May play a critical role in biogenesis of 30S subunits. The chain is Ribosomal RNA small subunit methyltransferase A from Xanthomonas oryzae pv. oryzae (strain MAFF 311018).